Consider the following 378-residue polypeptide: MATDYYAVLGVRRDASQDEIKKAFRRLARELHPDVNPDPKTQERFKEINAAYEVLSDPQKKQVYDLGGDPLSQAAGGGAGGFGAGGFGNFSDIMDAFFGTASQRGPRSRTRRGQDAMIRIEVELDEAAFGTTKDIQVDTAVVCNTCNGEGAAPGTSAQTCDMCRGRGEVSQVTRSFLGQVMTSRPCPQCQGFGTVVPTPCPECAGDGRVRSRRTLTVKIPAGVDNGTRIQLAGEGEVGPGGGPAGDLYVEIHELPHSTFQRRGDDLHCTVTIPMTAAALGTKVPLETLDGMEEVDIRPGTQSGQSIPKHGRGVTHLRGGGRGDLIVHVEVTTPGKLDPEQERLLRELAKLRGEERPTGQFQPGQQGLFSRLKDAFNGR.

One can recognise a J domain in the interval 4 to 68 (DYYAVLGVRR…QKKQVYDLGG (65 aa)). The CR-type zinc-finger motif lies at 130-212 (GTTKDIQVDT…CAGDGRVRSR (83 aa)). Zn(2+)-binding residues include C143, C146, C160, C163, C186, C189, C200, and C203. CXXCXGXG motif repeat units lie at residues 143 to 150 (CNTCNGEG), 160 to 167 (CDMCRGRG), 186 to 193 (CPQCQGFG), and 200 to 207 (CPECAGDG). Disordered regions lie at residues 297–319 (RPGTQSGQSIPKHGRGVTHLRGG) and 351–378 (RGEERPTGQFQPGQQGLFSRLKDAFNGR). Positions 358–367 (GQFQPGQQGL) are enriched in polar residues.

Belongs to the DnaJ family. Homodimer. The cofactor is Zn(2+).

It localises to the cytoplasm. In terms of biological role, participates actively in the response to hyperosmotic and heat shock by preventing the aggregation of stress-denatured proteins and by disaggregating proteins, also in an autonomous, DnaK-independent fashion. Unfolded proteins bind initially to DnaJ; upon interaction with the DnaJ-bound protein, DnaK hydrolyzes its bound ATP, resulting in the formation of a stable complex. GrpE releases ADP from DnaK; ATP binding to DnaK triggers the release of the substrate protein, thus completing the reaction cycle. Several rounds of ATP-dependent interactions between DnaJ, DnaK and GrpE are required for fully efficient folding. Also involved, together with DnaK and GrpE, in the DNA replication of plasmids through activation of initiation proteins. This is Chaperone protein DnaJ 2 from Streptomyces coelicolor (strain ATCC BAA-471 / A3(2) / M145).